A 458-amino-acid polypeptide reads, in one-letter code: Lysine-rich nucleolar protein 1 (458 aa).

Residues 1-14 (MITKTHKVDLGLPE) show a composition bias toward basic and acidic residues. The disordered stretch occupies residues 1–21 (MITKTHKVDLGLPEKKKKKKV). Lysine 7 is covalently cross-linked (Glycyl lysine isopeptide (Lys-Gly) (interchain with G-Cter in SUMO2)). Residues serine 42 and serine 50 each carry the phosphoserine modification. A disordered region spans residues 46–305 (ATSPSKSVAH…ESGVAGDPWK (260 aa)). The span at 64 to 73 (VKKKKKKKKG) shows a compositional bias: basic residues. A Glycyl lysine isopeptide (Lys-Gly) (interchain with G-Cter in SUMO2) cross-link involves residue lysine 101. Residue serine 111 is modified to Phosphoserine. A Glycyl lysine isopeptide (Lys-Gly) (interchain with G-Cter in SUMO2) cross-link involves residue lysine 130. Residue serine 132 is modified to Phosphoserine. Residues 145–155 (GKKLKKHKKEK) are compositionally biased toward basic residues. Basic and acidic residues predominate over residues 173–192 (EAREARDVGDTCSVGKKDEE). Basic residues predominate over residues 198 to 218 (QKRKRKSPREHNGKVKKKKKI). Lysine 249 is covalently cross-linked (Glycyl lysine isopeptide (Lys-Gly) (interchain with G-Cter in SUMO1); alternate). Lysine 249 participates in a covalent cross-link: Glycyl lysine isopeptide (Lys-Gly) (interchain with G-Cter in SUMO2); alternate. Serine 265 is modified (phosphoserine). Residues 265–274 (SAKKKMKSKK) show a composition bias toward basic residues. Residues lysine 275, lysine 287, and lysine 305 each participate in a glycyl lysine isopeptide (Lys-Gly) (interchain with G-Cter in SUMO2) cross-link. The tract at residues 306–458 (EETDTDLEVV…NASKSVKLED (153 aa)) is interaction with ZNF106. Threonine 308 and threonine 310 each carry phosphothreonine. Glycyl lysine isopeptide (Lys-Gly) (interchain with G-Cter in SUMO2) cross-links involve residues lysine 319, lysine 353, lysine 373, lysine 375, and lysine 407. Residues 336–353 (QEEIDRESGKTEASETRK) are compositionally biased toward basic and acidic residues. Residues 336–355 (QEEIDRESGKTEASETRKWT) are disordered. Arginine 430 is modified (omega-N-methylarginine). A Glycyl lysine isopeptide (Lys-Gly) (interchain with G-Cter in SUMO2) cross-link involves residue lysine 442.

As to quaternary structure, interacts with ZNF106.

Its subcellular location is the nucleus. The protein resides in the nucleolus. The protein is Lysine-rich nucleolar protein 1 (KNOP1) of Homo sapiens (Human).